A 123-amino-acid polypeptide reads, in one-letter code: Ig heavy chain V region H8 (123 aa).

Residues 1 to 114 (EVKLVESGGG…BSYWYFDVWG (114 aa)) form the Ig-like domain.

This chain is Ig heavy chain V region H8, found in Mus musculus (Mouse).